A 229-amino-acid chain; its full sequence is N-acetyltransferase MPR1 (229 aa).

Residues 65-219 (FNLEIESGKT…DAIIYGKDLT (155 aa)) form the N-acetyltransferase domain. Asparagine 135 contacts substrate. Residue 145-150 (RGQKVG) coordinates CoA. Residue 172 to 173 (NL) participates in substrate binding.

This sequence belongs to the acetyltransferase family. As to quaternary structure, homodimer. Not glycosylated.

The protein localises to the cytoplasm. It is found in the mitochondrion. The catalysed reaction is L-glutamate 5-semialdehyde + acetyl-CoA = N-acetyl-L-glutamate 5-semialdehyde + CoA + H(+). In terms of biological role, N-acetyltransferase involved in oxidative stress resistance. Acetylates the toxic proline metabolism intermediate (S)-1-pyrroline-5-carboxylate (P5C), or more likely its spontaneously forming tautomer glutamate-5-semialdehyde (GSA) into N-acetyl-GSA for arginine synthesis in the mitochondria. P5C has been shown to increase the levels of reactive oxygen species (ROS) in the cell by inhibiting the function of the respiratory chain in the mitochondria. The enzyme is able to reduce intracellular ROS levels under P5C-induced oxidative stress and protects cells from damage by oxidative stress. Also acetylates and thereby detoxifies the proline analog azetidine-2-carboxylate (AZC), however it is unlikely that AZC is a natural substrate as it occurs only in plants belonging to the Lilaceae family. Does not acetylate proline. The sequence is that of N-acetyltransferase MPR1 from Saccharomyces cerevisiae (Baker's yeast).